A 531-amino-acid polypeptide reads, in one-letter code: MSLPSGHTTGHTDQVVQRRARCWDIYQRRFSSRSEPVNPGMHSSSHQQQDGDAAMHGAHMDSPVRYTPYTISPYNRKGSFRKQDQTHVNMEREQKPPERRMEGNMPDGTLGSWFKITVPFGIKYNEKWLLNLIQNECSVPFVPVEFHYENMHASFFVENASIAYALKNVSGKIWDEDNEKISIFVNPAGIPHFVHRELKSEKVEQIKLAMNQQCDVSQEALDIQRLPFYPDMVNRDTKMASNPRKCMAASLDVHEENIPTVMSAGEMDKWKGIEPGEKCADRSPVCTTFSDTSSNINSILELFPKLLCLDGQQSPRATLCGTEAHKRLPTCKGSFFGSEMLKNLVLQFLQQYYLIYDSGDRQGLLSAYHDEACFSLSIPFNPEDSAPSSFCKFFKDSRNIKILKDPYLRGELLKHTKLDIVDSLSALPKTQHDLSSFLVDMWYQTEWMLCFSVNGVFKEVEGQSQGSVLAFTRTFIATPGSSSSLCIVNDKLFVRDTSHQGTQSALFTLVPTAFSSSVPAFSQEQQKMLPS.

Disordered stretches follow at residues arginine 33–histidine 59 and glutamine 83–proline 106. The span at methionine 41–aspartate 50 shows a compositional bias: polar residues. A compositionally biased stretch (basic and acidic residues) spans glutamine 83–glutamate 102. An RRM domain is found at tryptophan 113 to histidine 192. An NTF2 domain is found at leucine 344 to valine 494.

The protein belongs to the NXF family. In terms of assembly, interacts with NXT1, NXT2, E1B-AP5 and CRM1 nuclear export factor. As to expression, expressed at high level in testis and at low level in a small number of tissues.

Its subcellular location is the nucleus. It is found in the cytoplasm. May function as a tissue-specific nuclear mRNA export factor. The protein is Nuclear RNA export factor 3 (NXF3) of Homo sapiens (Human).